The following is a 625-amino-acid chain: Ankyrin repeat domain-containing protein oryK (625 aa).

ANK repeat units follow at residues 1–27 (MDIY…DVDG), 31–60 (DGKT…GRGP), 62–89 (NPSL…NAER), 90–119 (EHRS…EYQD), 162–195 (FFDY…DVNC), 202–232 (QFET…DLTI), 500–530 (DTRC…NVNF), 534–562 (SDRT…DIDL), and 568–598 (EGRT…DFSI).

The protein operates within secondary metabolite biosynthesis. Functionally, ankyrin repeat domain-containing protein; part of the gene cluster that mediates the biosynthesis of oryzines, natural products with an unusual maleidride backbone. The two subunits of the fungal fatty acid synthase oryfasA and oryfasB probably form octenoic acid. This fatty acid is most likely activated by the acyl-CoA ligase oryP to give octenyl-CoA before the citrate synthase-like protein oryE catalyzes condensation with oxaloacetate to form tricarboxylic acid. The next steps of the pathways are conjectural, but a favorite possible route has been proposed, beginning with decarboxylation and concomitant dehydration by the decarboxylase oryM, followed by tautomerization, which may lead to the production of a diene intermediate. Reduction of this diene intermediate could give the known metabolite piliformic acid. On the pathway to oryzine B and oryzine A, however, hydroxylation of the diene by the alpha-ketoglutarate-dependent dioxygenase oryG and lactonisation by the lactonohydrolases oryH or oryL could give oryzine B directly. Finally, enoyl reduction by the dehydrogenase oryD would then convert oryzine B into oryzine A. In Aspergillus oryzae (strain ATCC 42149 / RIB 40) (Yellow koji mold), this protein is Ankyrin repeat domain-containing protein oryK.